Reading from the N-terminus, the 423-residue chain is Transducer protein Htr13 (423 aa).

Over residues 1-19 (MTGPDNSLTDPSASPSTPV) the composition is skewed to polar residues. Positions 1–21 (MTGPDNSLTDPSASPSTPVAS) are disordered. The Methyl-accepting transducer domain maps to 152 to 388 (AVAELIERAR…ELTMMIDEAA (237 aa)).

This sequence belongs to the methyl-accepting chemotaxis (MCP) protein family. Post-translationally, methylated by CheR.

Its subcellular location is the cytoplasm. Functionally, potentially involved in chemo- or phototactic signal transduction. This Halobacterium salinarum (strain ATCC 29341 / DSM 671 / R1) protein is Transducer protein Htr13 (htr13).